The primary structure comprises 175 residues: Ribosome maturation factor RimM (175 aa).

The PRC barrel domain maps to 97–175; the sequence is EGEFYWHQLE…RMVVDWDPEF (79 aa).

The protein belongs to the RimM family. Binds ribosomal protein uS19.

It is found in the cytoplasm. In terms of biological role, an accessory protein needed during the final step in the assembly of 30S ribosomal subunit, possibly for assembly of the head region. Essential for efficient processing of 16S rRNA. May be needed both before and after RbfA during the maturation of 16S rRNA. It has affinity for free ribosomal 30S subunits but not for 70S ribosomes. The protein is Ribosome maturation factor RimM of Marinobacter nauticus (strain ATCC 700491 / DSM 11845 / VT8) (Marinobacter aquaeolei).